A 231-amino-acid polypeptide reads, in one-letter code: 7-cyano-7-deazaguanine synthase (231 aa).

8–18 (FSGGQDSTTCL) contributes to the ATP binding site. Zn(2+) contacts are provided by cysteine 187, cysteine 196, cysteine 199, and cysteine 202.

This sequence belongs to the QueC family. It depends on Zn(2+) as a cofactor.

It catalyses the reaction 7-carboxy-7-deazaguanine + NH4(+) + ATP = 7-cyano-7-deazaguanine + ADP + phosphate + H2O + H(+). The protein operates within purine metabolism; 7-cyano-7-deazaguanine biosynthesis. Functionally, catalyzes the ATP-dependent conversion of 7-carboxy-7-deazaguanine (CDG) to 7-cyano-7-deazaguanine (preQ(0)). The polypeptide is 7-cyano-7-deazaguanine synthase (Vibrio vulnificus (strain CMCP6)).